The primary structure comprises 410 residues: Chaperone protein dnaJ 15 (410 aa).

Residues 17–82 (DPYEVLCVSK…EKRRHYDNAG (66 aa)) form the J domain. Positions 284–344 (AKTYEDTTEK…TVDELLKQRD (61 aa)) form a coiled coil. A disordered region spans residues 351-410 (SVVKTPSGNNLSNGSSSKAQGDESKGDGDSAGEEGGTENRDKSKRKWFNLNLKGSDKKLG). Residues 357–367 (SGNNLSNGSSS) show a composition bias toward low complexity.

Belongs to the DnaJ family. B/II subfamily. In terms of tissue distribution, expressed at high levels in root cap, root tip meristematic region and elongation zones, and at lower levels in mature part of roots (at protein level). Constitutively expressed in seedlings, etiolated or not, roots, rosette leaves, cauline leaves, stems, flowers, siliques and pollen.

It localises to the cytoplasm. It is found in the cytoskeleton. Its subcellular location is the endoplasmic reticulum membrane. The protein resides in the golgi apparatus membrane. Functionally, plays a continuous role in plant development probably in the structural organization of compartments. Seems to be involved in early gravitropic signal transduction within the gravity-perceiving cells (statocytes), where it influences pH changes and auxin distribution. Probably affects the localization and/or activity of auxin efflux carrier components (PIN proteins) or other proteins involved in lateral auxin transport. The polypeptide is Chaperone protein dnaJ 15 (ATJ15) (Arabidopsis thaliana (Mouse-ear cress)).